We begin with the raw amino-acid sequence, 474 residues long: Siroheme synthase (474 aa).

The precorrin-2 dehydrogenase /sirohydrochlorin ferrochelatase stretch occupies residues 1 to 203; the sequence is MKLFPLFADL…QRPEEAERLL (203 aa). Residues 22 to 23 and 43 to 44 contribute to the NAD(+) site; these read EI and PA. A Phosphoserine modification is found at S128. Residues 216-474 are uroporphyrinogen-III C-methyltransferase; that stretch reads GSVVLVGAGP…QRPAPAALAA (259 aa). Residue P225 coordinates S-adenosyl-L-methionine. Residue D248 is the Proton acceptor of the active site. Catalysis depends on K270, which acts as the Proton donor. Residues 302–304, I307, 332–333, M384, and G413 contribute to the S-adenosyl-L-methionine site; these read GGD and TA.

In the N-terminal section; belongs to the precorrin-2 dehydrogenase / sirohydrochlorin ferrochelatase family. It in the C-terminal section; belongs to the precorrin methyltransferase family.

It catalyses the reaction uroporphyrinogen III + 2 S-adenosyl-L-methionine = precorrin-2 + 2 S-adenosyl-L-homocysteine + H(+). The enzyme catalyses precorrin-2 + NAD(+) = sirohydrochlorin + NADH + 2 H(+). The catalysed reaction is siroheme + 2 H(+) = sirohydrochlorin + Fe(2+). The protein operates within cofactor biosynthesis; adenosylcobalamin biosynthesis; precorrin-2 from uroporphyrinogen III: step 1/1. It participates in cofactor biosynthesis; adenosylcobalamin biosynthesis; sirohydrochlorin from precorrin-2: step 1/1. Its pathway is porphyrin-containing compound metabolism; siroheme biosynthesis; precorrin-2 from uroporphyrinogen III: step 1/1. It functions in the pathway porphyrin-containing compound metabolism; siroheme biosynthesis; siroheme from sirohydrochlorin: step 1/1. The protein operates within porphyrin-containing compound metabolism; siroheme biosynthesis; sirohydrochlorin from precorrin-2: step 1/1. In terms of biological role, multifunctional enzyme that catalyzes the SAM-dependent methylations of uroporphyrinogen III at position C-2 and C-7 to form precorrin-2 via precorrin-1. Then it catalyzes the NAD-dependent ring dehydrogenation of precorrin-2 to yield sirohydrochlorin. Finally, it catalyzes the ferrochelation of sirohydrochlorin to yield siroheme. The chain is Siroheme synthase from Bordetella petrii (strain ATCC BAA-461 / DSM 12804 / CCUG 43448).